Consider the following 291-residue polypeptide: Small ribosomal subunit protein uS2 (291 aa).

The disordered stretch occupies residues 255–291; the sequence is AGAATGEWSEAQGAQWETGTGAPAADWAAEPAKESSW.

The protein belongs to the universal ribosomal protein uS2 family. As to quaternary structure, component of the small ribosomal subunit. Mature ribosomes consist of a small (40S) and a large (60S) subunit. The 40S subunit contains about 33 different proteins and 1 molecule of RNA (18S). The 60S subunit contains about 49 different proteins and 3 molecules of RNA (25S, 5.8S and 5S). Interacts with RPS21.

Its subcellular location is the cytoplasm. Its function is as follows. Required for the assembly and/or stability of the 40S ribosomal subunit. Required for the processing of the 20S rRNA-precursor to mature 18S rRNA in a late step of the maturation of 40S ribosomal subunits. The polypeptide is Small ribosomal subunit protein uS2 (Podospora anserina (strain S / ATCC MYA-4624 / DSM 980 / FGSC 10383) (Pleurage anserina)).